The chain runs to 416 residues: Glutamyl-tRNA reductase (416 aa).

Residues 49–52, Ser-105, 110–112, and Gln-116 each bind substrate; these read TCNR and EPQ. The active-site Nucleophile is the Cys-50. 185–190 is an NADP(+) binding site; sequence GAGETI.

Belongs to the glutamyl-tRNA reductase family. Homodimer.

The catalysed reaction is (S)-4-amino-5-oxopentanoate + tRNA(Glu) + NADP(+) = L-glutamyl-tRNA(Glu) + NADPH + H(+). The protein operates within porphyrin-containing compound metabolism; protoporphyrin-IX biosynthesis; 5-aminolevulinate from L-glutamyl-tRNA(Glu): step 1/2. Functionally, catalyzes the NADPH-dependent reduction of glutamyl-tRNA(Glu) to glutamate 1-semialdehyde (GSA). This Shewanella piezotolerans (strain WP3 / JCM 13877) protein is Glutamyl-tRNA reductase.